A 572-amino-acid polypeptide reads, in one-letter code: MFS-type transporter pydD (572 aa).

A compositionally biased stretch (basic and acidic residues) spans 1–15 (MLQEDKSSETMHDPS). Positions 1 to 46 (MLQEDKSSETMHDPSTRGVETRNVTAVDSPLETATTSESPETERTN) are disordered. N-linked (GlcNAc...) asparagine glycosylation occurs at Asn23. Over residues 29-39 (SPLETATTSES) the composition is skewed to low complexity. 8 helical membrane-spanning segments follow: residues 56 to 76 (FWAL…EGTI), 88 to 108 (LGGG…MTAM), 123 to 143 (WPML…GGAT), 156 to 176 (GIGA…VVPL), 185 to 205 (IVMG…GLIV), 212 to 232 (WTFY…FSFL), 255 to 275 (ALFV…GSVY), and 282 to 302 (VLVP…FEGS). Asn317 carries an N-linked (GlcNAc...) asparagine glycan. Helical transmembrane passes span 321 to 341 (VGVM…LYFM), 358 to 378 (VQIL…GFLM), 386 to 406 (PIHY…SLLD), 419 to 439 (IVYS…LLAP), 451 to 471 (TWSF…AAVF), and 529 to 549 (WLVS…AREV).

This sequence belongs to the major facilitator superfamily.

The protein resides in the membrane. In terms of biological role, MFS-type transporter; part of the gene cluster that mediates the biosynthesis of pyrrocidines, fungal natural products containing a macrocyclic para-cyclophane connected to a decahydrofluorene ring system that show potent antibiotic activities toward Gram-negative bacteria. The chain is MFS-type transporter pydD from Acremonium sp.